A 144-amino-acid polypeptide reads, in one-letter code: MAKKIIGYIKLQIPAGKANPSPPVGPALGQRGLNIMEFCKAFNAATQSMEPGLPIPVVITAFADKSFTFVMKTPPASILLKKAAGLQKGSSNPLTNKVGKLTRAQLEEIAKTKEPDLTAADLDAAVRTIAGSARSMGLDVEGVV.

This sequence belongs to the universal ribosomal protein uL11 family. As to quaternary structure, part of the ribosomal stalk of the 50S ribosomal subunit. Interacts with L10 and the large rRNA to form the base of the stalk. L10 forms an elongated spine to which L12 dimers bind in a sequential fashion forming a multimeric L10(L12)X complex. Post-translationally, one or more lysine residues are methylated.

In terms of biological role, forms part of the ribosomal stalk which helps the ribosome interact with GTP-bound translation factors. In Neisseria meningitidis serogroup C (strain 053442), this protein is Large ribosomal subunit protein uL11.